We begin with the raw amino-acid sequence, 669 residues long: Probable ferric reductase transmembrane component (669 aa).

The tract at residues 17–86 is disordered; the sequence is FKTNGTEYAK…SGKGNSGTST (70 aa). Residues Asn20, Asn52, Asn64, and Asn116 are each glycosylated (N-linked (GlcNAc...) asparagine). A compositionally biased stretch (low complexity) spans 28–86; sequence TTKSSSGSKTSTSASKSSKSTGSSNASKSSTNAHGSNSSTSSTSSSSSKSGKGNSGTST. Residues 122–142 traverse the membrane as a helical segment; sequence GSGLLGYWAGILAIAIFANMI. A glycan (N-linked (GlcNAc...) asparagine) is linked at Asn152. 5 helical membrane-spanning segments follow: residues 198 to 218, 234 to 254, 281 to 301, 313 to 333, and 340 to 360; these read IIVV…IHHV, LIAD…ILFG, VDVL…KATG, IWGT…MLFF, and VFFL…YYHL. The 135-residue stretch at 239–373 folds into the Ferric oxidoreductase domain; the sequence is TGILGTFLIP…GYGDFMWAAI (135 aa). The FAD-binding FR-type domain maps to 374 to 492; it reads AVWAFDRVVR…EGPYGEPSSA (119 aa). 437–442 is a binding site for FAD; sequence HPFTFT. Residues 499–519 traverse the membrane as a helical segment; it reads VVFVAGGNGIPGIYSECVDLA. 2 N-linked (GlcNAc...) asparagine glycosylation sites follow: Asn524 and Asn653.

This sequence belongs to the ferric reductase (FRE) family. It depends on FAD as a cofactor.

The protein localises to the membrane. It catalyses the reaction 2 a Fe(II)-siderophore + NAD(+) + H(+) = 2 a Fe(III)-siderophore + NADH. This is Probable ferric reductase transmembrane component (CFL1) from Candida albicans (Yeast).